The primary structure comprises 90 residues: Large ribosomal subunit protein bL27 (90 aa).

The disordered stretch occupies residues 1-21; the sequence is MASKKAGGSTRNGRDSEAKRL.

It belongs to the bacterial ribosomal protein bL27 family.

In Neisseria gonorrhoeae (strain ATCC 700825 / FA 1090), this protein is Large ribosomal subunit protein bL27.